The following is a 228-amino-acid chain: Ribosomal RNA small subunit methyltransferase G (228 aa).

S-adenosyl-L-methionine is bound by residues Gly-82, Leu-87, 105–107 (DAT), 133–134 (VE), and Arg-147.

This sequence belongs to the methyltransferase superfamily. RNA methyltransferase RsmG family.

Its subcellular location is the cytoplasm. Specifically methylates the N7 position of a guanine in 16S rRNA. This is Ribosomal RNA small subunit methyltransferase G from Pelodictyon phaeoclathratiforme (strain DSM 5477 / BU-1).